The following is a 269-amino-acid chain: Imidazoleglycerol-phosphate dehydratase 2, chloroplastic (269 aa).

The transit peptide at 1-51 (MTTAPFLFPSLSRLHSARASSFPKPPVGSGAGVAFPARPYGSSLRLRSSVM) directs the protein to the chloroplast. Residues glutamate 83, 109–117 (HMLDQLASH), 135–139 (HHSNE), arginine 161, and arginine 183 each bind substrate. Histidine 109, histidine 135, histidine 136, and glutamate 139 together coordinate Mn(2+). 4 residues coordinate Mn(2+): histidine 207, histidine 231, histidine 232, and glutamate 235. Residues 231-239 (HHIIEATFK) and 261-263 (SSK) each bind substrate.

It belongs to the imidazoleglycerol-phosphate dehydratase family. Mn(2+) serves as cofactor.

The protein localises to the plastid. Its subcellular location is the chloroplast. It carries out the reaction D-erythro-1-(imidazol-4-yl)glycerol 3-phosphate = 3-(imidazol-4-yl)-2-oxopropyl phosphate + H2O. Its pathway is amino-acid biosynthesis; L-histidine biosynthesis; L-histidine from 5-phospho-alpha-D-ribose 1-diphosphate: step 6/9. This is Imidazoleglycerol-phosphate dehydratase 2, chloroplastic from Triticum aestivum (Wheat).